The primary structure comprises 194 residues: Factor in the germline alpha (194 aa).

The bHLH domain occupies 59 to 111 (ERRRVANAKERERIKNLNRGFAKLKALVPFLPQSRKPSKVDILKGATEYIQIL). The segment covering 121 to 137 (SEKQSPEEQTHSGRPSD) has biased composition (basic and acidic residues). The disordered stretch occupies residues 121-163 (SEKQSPEEQTHSGRPSDPHVSSTRELLGNATQPTSCASGLKKE). The span at 139-157 (HVSSTRELLGNATQPTSCA) shows a compositional bias: polar residues.

Heterodimer with TCF3/isoform E12. In terms of tissue distribution, expressed only in the oocytes within the ovary and at lower level in the testis. Found in the resting oocytes of the primordial follicle cells, at the periphery of the ovary and in the hilar region. Also detected in growing oocytes, but at lower levels.

Its subcellular location is the nucleus. Its function is as follows. Germ-line specific transcription factor implicated in postnatal oocyte-specific gene expression. Plays a key regulatory role in the expression of multiple oocyte-specific genes, including those that initiate folliculogenesis and those that encode the zona pellucida (ZP1, ZP2 and ZP3) required for fertilization and early embryonic survival. Essential for oocytes to survive and form primordial follicles. The persistence of FIGLA in adult females suggests that it may regulate additional pathways that are essential for normal ovarian development. Binds to the E-box (5'-CANNTG-3') of the ZPs (ZP1, ZP2, ZP3) promoters. In Mus musculus (Mouse), this protein is Factor in the germline alpha (Figla).